Consider the following 680-residue polypeptide: 1-deoxy-D-xylulose-5-phosphate synthase (680 aa).

Residues His-113 and Gly-154–Ser-156 each bind thiamine diphosphate. Asp-185 is a Mg(2+) binding site. Thiamine diphosphate-binding positions include Gly-186–Ala-187, Asn-214, Phe-323, and Glu-408. Asn-214 contributes to the Mg(2+) binding site.

The protein belongs to the transketolase family. DXPS subfamily. As to quaternary structure, homodimer. It depends on Mg(2+) as a cofactor. Requires thiamine diphosphate as cofactor.

It carries out the reaction D-glyceraldehyde 3-phosphate + pyruvate + H(+) = 1-deoxy-D-xylulose 5-phosphate + CO2. It functions in the pathway metabolic intermediate biosynthesis; 1-deoxy-D-xylulose 5-phosphate biosynthesis; 1-deoxy-D-xylulose 5-phosphate from D-glyceraldehyde 3-phosphate and pyruvate: step 1/1. Its function is as follows. Catalyzes the acyloin condensation reaction between C atoms 2 and 3 of pyruvate and glyceraldehyde 3-phosphate to yield 1-deoxy-D-xylulose-5-phosphate (DXP). This is 1-deoxy-D-xylulose-5-phosphate synthase from Psychrobacter arcticus (strain DSM 17307 / VKM B-2377 / 273-4).